Here is an 87-residue protein sequence, read N- to C-terminus: Spore morphogenesis and germination protein YwcE (87 aa).

3 consecutive transmembrane segments (helical) span residues 1 to 21 (MMDM…FIWL), 26 to 46 (VALS…FYAT), and 56 to 76 (LMII…FIIY).

The protein belongs to the YwcE family.

It localises to the cell membrane. The protein localises to the spore membrane. Its subcellular location is the spore outer membrane. Functionally, required for proper spore morphogenesis. Important for spore germination. This is Spore morphogenesis and germination protein YwcE (ywcE) from Bacillus subtilis (strain 168).